A 183-amino-acid chain; its full sequence is Ribosome rescue factor SmrB (183 aa).

Positions 98–173 constitute a Smr domain; the sequence is LDLHGLTQKQ…GDAALLVLIE (76 aa).

The protein belongs to the SmrB family. Associates with collided ribosomes, but not with correctly translating polysomes.

Acts as a ribosome collision sensor. Detects stalled/collided disomes (pairs of ribosomes where the leading ribosome is stalled and a second ribosome has collided with it) and endonucleolytically cleaves mRNA at the 5' boundary of the stalled ribosome. Stalled/collided disomes form a new interface (primarily via the 30S subunits) that binds SmrB. Cleaved mRNA becomes available for tmRNA ligation, leading to ribosomal subunit dissociation and rescue of stalled ribosomes. This Erwinia tasmaniensis (strain DSM 17950 / CFBP 7177 / CIP 109463 / NCPPB 4357 / Et1/99) protein is Ribosome rescue factor SmrB.